A 548-amino-acid chain; its full sequence is Probable malate:quinone oxidoreductase (548 aa).

Residues 520 to 548 form a disordered region; that stretch reads YDRPQAADSTPKPQLKPQPVQKEVADIAL. A compositionally biased stretch (low complexity) spans 530-541; sequence PKPQLKPQPVQK.

This sequence belongs to the MQO family. Requires FAD as cofactor.

The enzyme catalyses (S)-malate + a quinone = a quinol + oxaloacetate. The protein operates within carbohydrate metabolism; tricarboxylic acid cycle; oxaloacetate from (S)-malate (quinone route): step 1/1. The protein is Probable malate:quinone oxidoreductase of Shigella dysenteriae serotype 1 (strain Sd197).